A 288-amino-acid polypeptide reads, in one-letter code: MKKLSFQQIILTLQNYWQDYGCAILQPYDAHVGAGTFHPATVLRCLGTKPWSVAYVQPSRRPGDSRYGMHPNRMQHYYQFQVILKPSPDNIQELYLKSLECLGIDLKIHDIRFVEDDWESPTLGAAGLGWEVWCNGMEVSQFTYMQQIGGIECRPVAGEITYGLERLALYIQGVDEVRELDWSGQVGEKALKYGEVDFEAEGQFSKYNLELADSEMLLRHFKDSEDQCERLIKANLPMPAYDECLKASHAFNQLNALGVISVTERASYVLRVRHLARICCTKWLEMNK.

It belongs to the class-II aminoacyl-tRNA synthetase family. Tetramer of two alpha and two beta subunits.

The protein localises to the cytoplasm. It carries out the reaction tRNA(Gly) + glycine + ATP = glycyl-tRNA(Gly) + AMP + diphosphate. The sequence is that of Glycine--tRNA ligase alpha subunit from Rickettsia africae (strain ESF-5).